We begin with the raw amino-acid sequence, 352 residues long: Desmethylxanthohumol 6'-O-methyltransferase (352 aa).

Residue aspartate 219 coordinates S-adenosyl-L-methionine. Histidine 257 (proton acceptor) is an active-site residue.

This sequence belongs to the class I-like SAM-binding methyltransferase superfamily. Cation-independent O-methyltransferase family. Homodimer. As to expression, highly expressed in lupulin glands. Detected in early-, mid- and late-stage cones.

The protein resides in the cytoplasm. It carries out the reaction desmethylxanthohumol + S-adenosyl-L-methionine = xanthohumol + S-adenosyl-L-homocysteine + H(+). It catalyses the reaction xanthogalenol + S-adenosyl-L-methionine = 4'-O-methylxanthohumol + S-adenosyl-L-homocysteine + H(+). Its pathway is secondary metabolite biosynthesis. Its activity is regulated as follows. Inhibited by S-adenosyl homocysteine. In terms of biological role, involved in the biosynthesis of prenylated phenolics natural products which contribute to the bitter taste of beer and display broad biological activities. Catalyzes the biosynthesis of xanthohumol. Methylates desmethylxanthohumol and xanthogalenol, but not caffeic acid, prenylflavanones, simple phenols or phenylpropanoids. In Humulus lupulus (European hop), this protein is Desmethylxanthohumol 6'-O-methyltransferase.